A 432-amino-acid chain; its full sequence is Phosphoprotein associated with glycosphingolipid-enriched microdomains 1 (432 aa).

At 1–16 (MGPAGSLLGSGQMQIT) the chain is on the extracellular side. Residues 17–37 (LWGSLAAVAIFFVITFLIFLC) form a helical; Signal-anchor for type III membrane protein membrane-spanning segment. S-palmitoyl cysteine attachment occurs at residues Cys-37 and Cys-40. Topologically, residues 38 to 432 (SSCDREKKPR…LQQGRDITRL (395 aa)) are cytoplasmic. Phosphoserine is present on residues Ser-50 and Ser-61. Position 105 is a phosphotyrosine; by LYN (Tyr-105). A compositionally biased stretch (polar residues) spans 110–122 (TSASDLLDSQDST). Residues 110-137 (TSASDLLDSQDSTGKPKCHQSRELPRIP) are disordered. 3 positions are modified to phosphotyrosine: Tyr-163, Tyr-181, and Tyr-227. 2 disordered regions span residues 197–230 (EKGH…YASV) and 244–432 (SILG…ITRL). The segment covering 220-230 (GKAEFAEYASV) has biased composition (basic and acidic residues). Residue Ser-229 is modified to Phosphoserine. Residues 316-356 (MYSSVNKPGQLVNKSGQSLTVPESTYTSIQGDPQRSPSSCN) are compositionally biased toward polar residues. Residue Tyr-317 is modified to Phosphotyrosine; by FYN and LYN. Residues 317–320 (YSSV) are interaction with CSK. Ser-354 carries the post-translational modification Phosphoserine. Phosphotyrosine is present on Tyr-359. Ser-380 is subject to Phosphoserine. Phosphotyrosine is present on residues Tyr-387 and Tyr-417. The tract at residues 430–432 (TRL) is interaction with NHERF1.

In terms of assembly, interacts with FYN. When phosphorylated, interacts with CSK. Interacts with NHERF1/EBP50. In resting T-cells, part of a PAG1-NHERF1-MSN complex which is disrupted upon TCR activation. Interacts with LYN on plasma membrane lipid rafts. Identified in a complex with LYN and STAT3. Post-translationally, palmitoylated. In terms of processing, phosphorylated by FYN on Tyr-317 in resting T-cells; which promotes interaction with CSK. Dephosphorylated by PTPRC/CD45 upon TCR activation; which leads to CSK dissociation. May also be dephosphorylated by PTPN11. Hyperphosphorylated in mast cells upon FCER1 activation. Phosphorylated by LYN. As to expression, ubiquitously expressed. Present in germinal center B-cells, plasma cells, T-cells, monocytes and platelets (at protein level).

Its subcellular location is the cell membrane. Negatively regulates TCR (T-cell antigen receptor)-mediated signaling in T-cells and FCER1 (high affinity immunoglobulin epsilon receptor)-mediated signaling in mast cells. Promotes CSK activation and recruitment to lipid rafts, which results in LCK inhibition. Inhibits immunological synapse formation by preventing dynamic arrangement of lipid raft proteins. May be involved in cell adhesion signaling. This chain is Phosphoprotein associated with glycosphingolipid-enriched microdomains 1 (PAG1), found in Homo sapiens (Human).